Here is a 223-residue protein sequence, read N- to C-terminus: Small ribosomal subunit protein uS5 (223 aa).

Residues M1 to F66 are disordered. The segment covering R13 to G22 has biased composition (gly residues). Basic and acidic residues predominate over residues G53–F66. Positions F66–V129 constitute an S5 DRBM domain.

It belongs to the universal ribosomal protein uS5 family. As to quaternary structure, part of the 30S ribosomal subunit. Contacts proteins S4 and S8.

Its function is as follows. With S4 and S12 plays an important role in translational accuracy. Located at the back of the 30S subunit body where it stabilizes the conformation of the head with respect to the body. In Gloeobacter violaceus (strain ATCC 29082 / PCC 7421), this protein is Small ribosomal subunit protein uS5.